The chain runs to 218 residues: Ribonuclease T (218 aa).

In terms of domain architecture, Exonuclease spans 20 to 194 (VVIDVETAGF…YDAERTAELF (175 aa)). Residues Asp-23, Glu-25, His-181, and Asp-186 each coordinate Mg(2+). His-181 functions as the Proton donor/acceptor in the catalytic mechanism.

The protein belongs to the RNase T family. In terms of assembly, homodimer. Mg(2+) is required as a cofactor.

Functionally, trims short 3' overhangs of a variety of RNA species, leaving a one or two nucleotide 3' overhang. Responsible for the end-turnover of tRNA: specifically removes the terminal AMP residue from uncharged tRNA (tRNA-C-C-A). Also appears to be involved in tRNA biosynthesis. This Baumannia cicadellinicola subsp. Homalodisca coagulata protein is Ribonuclease T.